The primary structure comprises 366 residues: Glutamate 5-kinase (366 aa).

Lys17 serves as a coordination point for ATP. Substrate is bound by residues Ser57, Asp144, and Asn156. ATP contacts are provided by residues 176–177 (SD) and 216–222 (TGGMASK). The PUA domain occupies 278–352 (QGILHIDEGA…GKSTQELPAE (75 aa)).

It belongs to the glutamate 5-kinase family.

The protein localises to the cytoplasm. The enzyme catalyses L-glutamate + ATP = L-glutamyl 5-phosphate + ADP. It functions in the pathway amino-acid biosynthesis; L-proline biosynthesis; L-glutamate 5-semialdehyde from L-glutamate: step 1/2. In terms of biological role, catalyzes the transfer of a phosphate group to glutamate to form L-glutamate 5-phosphate. The sequence is that of Glutamate 5-kinase from Rhodococcus jostii (strain RHA1).